A 109-amino-acid polypeptide reads, in one-letter code: MFGKGGMGNLMKQAQQMQEKMQRMQEEIAQLEVTGESGAGLVKVTINGAHNCRRVEVDPSLLEDDKDMLEDLIAAAFNDAARRIAETQKEKMAAVSSGMQLPPGFKMPF.

The interval 1–23 is disordered; sequence MFGKGGMGNLMKQAQQMQEKMQR.

This sequence belongs to the YbaB/EbfC family. In terms of assembly, homodimer.

It localises to the cytoplasm. It is found in the nucleoid. Functionally, binds to DNA and alters its conformation. May be involved in regulation of gene expression, nucleoid organization and DNA protection. The polypeptide is Nucleoid-associated protein SG0690 (Sodalis glossinidius (strain morsitans)).